The primary structure comprises 61 residues: Large ribosomal subunit protein bL32 (61 aa).

The span at 1-16 (MAVPKKKTSKSRKNMR) shows a compositional bias: basic residues. A disordered region spans residues 1 to 20 (MAVPKKKTSKSRKNMRRAHD).

This sequence belongs to the bacterial ribosomal protein bL32 family.

This Pelobacter propionicus (strain DSM 2379 / NBRC 103807 / OttBd1) protein is Large ribosomal subunit protein bL32.